The following is a 550-amino-acid chain: Invertase (550 aa).

An N-terminal signal peptide occupies residues 1 to 22 (MIQLSPLLLLPLFSVFNSIADA). Substrate is bound by residues 39-42 (WMND), Q60, and 103-104 (FS). D42 is an active-site residue. 4 N-linked (GlcNAc...) asparagine glycosylation sites follow: N112, N113, N119, and N165. Residue 170–171 (RD) coordinates substrate. N211 carries N-linked (GlcNAc...) asparagine glycosylation. Position 223 (E223) interacts with substrate. N237 carries N-linked (GlcNAc...) asparagine glycosylation. W313 is a binding site for substrate. N333, N364, N398, and N420 each carry an N-linked (GlcNAc...) asparagine glycan.

Belongs to the glycosyl hydrolase 32 family.

The catalysed reaction is Hydrolysis of terminal non-reducing beta-D-fructofuranoside residues in beta-D-fructofuranosides.. This chain is Invertase (INV1), found in Wickerhamomyces anomalus (Yeast).